The following is a 319-amino-acid chain: Cobalamin biosynthesis protein CbiB (319 aa).

5 helical membrane passes run 56–76, 82–102, 153–173, 204–224, and 296–316; these read VMWVVVVGATWGVAWGVLALA, WFGWSVEVWMIFTTLAGRSLA, VDGIIAPLFFLFLGGAPLAMA, VANYLPARLSWLLLGIAAGLC, and LMWVASTLALALFIAARCGLS.

This sequence belongs to the CobD/CbiB family.

It is found in the cell membrane. The protein operates within cofactor biosynthesis; adenosylcobalamin biosynthesis. Its function is as follows. Converts cobyric acid to cobinamide by the addition of aminopropanol on the F carboxylic group. However, the true cosubstrate could be (R)-1-amino-2-propanol O-2-phosphate, leading to cobinamide phosphate. This Salmonella choleraesuis (strain SC-B67) protein is Cobalamin biosynthesis protein CbiB.